Here is a 60-residue protein sequence, read N- to C-terminus: Cytotoxin 1 (60 aa).

Intrachain disulfides connect Cys3–Cys21, Cys14–Cys38, Cys42–Cys53, and Cys54–Cys59.

This sequence belongs to the three-finger toxin family. Short-chain subfamily. Type IA cytotoxin sub-subfamily. In terms of assembly, monomer in solution; Homodimer and oligomer in the presence of negatively charged lipids forming a pore with a size ranging between 20 and 30 angstroms. In terms of tissue distribution, expressed by the venom gland.

The protein resides in the secreted. It is found in the target cell membrane. Functionally, basic protein that binds to cell membrane and depolarizes cardiomyocytes. This cytotoxin also possesses lytic activity on many other cells, including red blood cells. Interaction with sulfatides in the cell membrane induces pore formation and cell internalization and is responsible for cytotoxicity in cardiomyocytes. It targets the mitochondrial membrane and induces mitochondrial swelling and fragmentation. Inhibits protein kinases C. It binds to the integrin alpha-V/beta-3 with a moderate affinity. This chain is Cytotoxin 1, found in Naja pallida (Red spitting cobra).